Consider the following 258-residue polypeptide: tRNA pseudouridine synthase A (258 aa).

The active-site Nucleophile is Asp53. Tyr111 serves as a coordination point for substrate.

The protein belongs to the tRNA pseudouridine synthase TruA family. As to quaternary structure, homodimer.

It carries out the reaction uridine(38/39/40) in tRNA = pseudouridine(38/39/40) in tRNA. In terms of biological role, formation of pseudouridine at positions 38, 39 and 40 in the anticodon stem and loop of transfer RNAs. In Streptococcus agalactiae serotype Ia (strain ATCC 27591 / A909 / CDC SS700), this protein is tRNA pseudouridine synthase A.